The sequence spans 448 residues: Homogentisate 1,2-dioxygenase (448 aa).

The active-site Proton acceptor is histidine 302. 2 residues coordinate Fe cation: histidine 345 and glutamate 351. The homogentisate site is built by tyrosine 360 and histidine 381. Histidine 381 provides a ligand contact to Fe cation.

The protein belongs to the homogentisate dioxygenase family. As to quaternary structure, hexamer; dimer of trimers. Fe cation is required as a cofactor.

It catalyses the reaction homogentisate + O2 = 4-maleylacetoacetate + H(+). Its pathway is amino-acid degradation; L-phenylalanine degradation; acetoacetate and fumarate from L-phenylalanine: step 4/6. Involved in the catabolism of homogentisate (2,5-dihydroxyphenylacetate or 2,5-OH-PhAc), a central intermediate in the degradation of phenylalanine and tyrosine. Catalyzes the oxidative ring cleavage of the aromatic ring of homogentisate to yield maleylacetoacetate. The protein is Homogentisate 1,2-dioxygenase of Ralstonia pickettii (strain 12J).